Consider the following 297-residue polypeptide: Homoserine kinase (297 aa).

Residue 84–94 coordinates ATP; sequence PPARGLGSSAT.

Belongs to the GHMP kinase family. Homoserine kinase subfamily.

The protein resides in the cytoplasm. It carries out the reaction L-homoserine + ATP = O-phospho-L-homoserine + ADP + H(+). Its pathway is amino-acid biosynthesis; L-threonine biosynthesis; L-threonine from L-aspartate: step 4/5. In terms of biological role, catalyzes the ATP-dependent phosphorylation of L-homoserine to L-homoserine phosphate. This chain is Homoserine kinase (thrB), found in Aquifex aeolicus (strain VF5).